Here is a 504-residue protein sequence, read N- to C-terminus: Multicopper oxidase MmcO (504 aa).

The tat-type signal signal peptide spans 1 to 44 (MPELATSGNAFDKRRFSRRGFLGAGIASGFALAACASKPTASGA). Residues His120, His122, His161, and His163 each coordinate Cu cation. The region spanning 190-349 (EWIIILDDWT…NALARALLST (160 aa)) is the Plastocyanin-like domain. Residues His437, His440, His442, His485, Cys486, His487, and His491 each coordinate Cu cation.

The protein belongs to the multicopper oxidase family. Cu cation serves as cofactor. Predicted to be exported by the Tat system. The position of the signal peptide cleavage has not been experimentally proven.

The protein resides in the cell inner membrane. The protein localises to the periplasm. The catalysed reaction is 4 Fe(2+) + O2 + 4 H(+) = 4 Fe(3+) + 2 H2O. Functionally, required for copper resistance. In vitro, oxidizes organic substrates and Fe(2+). May act in vivo by oxidation of toxic periplasmic Cu(+). This Mycobacterium tuberculosis (strain ATCC 25618 / H37Rv) protein is Multicopper oxidase MmcO.